Reading from the N-terminus, the 104-residue chain is MGHAMTAQHQSDTLLHRLNTLPPKRYGVFLLNDDYTTMEFVVEILTEIFMLGQEQAVAVMLSVHHEGKGLCGTYTRDIAQTKQQQVMQRAKAEGHPLQCIVEEI.

It belongs to the ClpS family. Binds to the N-terminal domain of the chaperone ClpA.

Functionally, involved in the modulation of the specificity of the ClpAP-mediated ATP-dependent protein degradation. This chain is ATP-dependent Clp protease adapter protein ClpS, found in Neisseria gonorrhoeae (strain ATCC 700825 / FA 1090).